A 278-amino-acid chain; its full sequence is MDRLYHPAPSRTDCADAAVLRVRGGIVGAATQSDRVAEETPVALEYNGISHATMLASPADLEDYALGFSLTEGIVERPADVRGIEIVPQFNGIVVQVEISSACAARLKTRRRAMAGRTGCGLCGVETLPEVLRQVPTVADAAPVPLTAVLHGMRAMRGSQALHDITGATHAAAWADAEGRVQLVREDVGRHNALDKLVGALARQAIDPRSGMVLVSSRASFEMVQKCAAAGIGILAAVSAPTALAIRVAQNTNVALLGFVRNADAAIYSHPERLRLRP.

Cysteine 120 acts as the Cysteine persulfide intermediate in catalysis.

This sequence belongs to the FdhD family.

Its subcellular location is the cytoplasm. In terms of biological role, required for formate dehydrogenase (FDH) activity. Acts as a sulfur carrier protein that transfers sulfur from IscS to the molybdenum cofactor prior to its insertion into FDH. This chain is Sulfur carrier protein FdhD, found in Bordetella petrii (strain ATCC BAA-461 / DSM 12804 / CCUG 43448).